The following is a 313-amino-acid chain: Ornithine carbamoyltransferase (313 aa).

Residues 57–60 (STRT), R108, and 135–138 (HPTQ) contribute to the carbamoyl phosphate site. L-ornithine contacts are provided by residues N167, D231, and 235–236 (SM). Residues 272-273 (CL) and R300 each bind carbamoyl phosphate.

It belongs to the aspartate/ornithine carbamoyltransferase superfamily. OTCase family.

The protein resides in the cytoplasm. The enzyme catalyses carbamoyl phosphate + L-ornithine = L-citrulline + phosphate + H(+). The protein operates within amino-acid biosynthesis; L-arginine biosynthesis; L-arginine from L-ornithine and carbamoyl phosphate: step 1/3. Reversibly catalyzes the transfer of the carbamoyl group from carbamoyl phosphate (CP) to the N(epsilon) atom of ornithine (ORN) to produce L-citrulline. In Thermotoga petrophila (strain ATCC BAA-488 / DSM 13995 / JCM 10881 / RKU-1), this protein is Ornithine carbamoyltransferase.